The primary structure comprises 361 residues: FK506-binding protein 39 kDa (361 aa).

The tract at residues 122 to 256 (LVDEEDEEEE…PSSPKTRTLK (135 aa)) is disordered. Over residues 123-174 (VDEEDEEEEESDEDYDLSPTEEDLVETVSGDEESEEESESEDNSASEEDELD) the composition is skewed to acidic residues. Ser-192 is modified (phosphoserine). The span at 208-227 (QKVEGTPVKEKKVAFAEKLE) shows a compositional bias: basic and acidic residues. Thr-213 is modified (phosphothreonine). Residues 241–252 (QASSNAPSSPKT) show a composition bias toward polar residues. Phosphoserine is present on Ser-249. The PPIase FKBP-type domain maps to 275 to 361 (GKKVEMRYIG…VFEVKLVRVH (87 aa)).

The protein belongs to the FKBP-type PPIase family. FKBP3/4 subfamily.

It localises to the nucleus. The protein localises to the nucleolus. The enzyme catalyses [protein]-peptidylproline (omega=180) = [protein]-peptidylproline (omega=0). Its function is as follows. PPIase that acts as a histone chaperone. Histone proline isomerase that increases the rate of cis-trans isomerization at prolines on the histone H3 N-terminal tail. Proline isomerization influences H3 methylation thereby regulating gene expression. In Schizosaccharomyces pombe (strain 972 / ATCC 24843) (Fission yeast), this protein is FK506-binding protein 39 kDa.